A 230-amino-acid polypeptide reads, in one-letter code: Antiholin-like protein LrgB (230 aa).

7 consecutive transmembrane segments (helical) span residues Met-5–Phe-25, Gly-30–Val-50, Gly-61–Tyr-81, Trp-92–Val-112, Ile-149–Leu-169, Pro-177–Ile-197, and Ile-209–Ile-229.

It belongs to the CidB/LrgB family. LrgB subfamily.

It localises to the cell membrane. Functionally, inhibits the expression or activity of extracellular murein hydrolases by interacting, possibly with LrgA, with the holin-like protein CidA. The LrgAB and CidA proteins may affect the proton motive force of the membrane. May be involved in programmed cell death (PCD), possibly triggering PCD in response to antibiotics and environmental stresses. The polypeptide is Antiholin-like protein LrgB (Bacillus cereus (strain Q1)).